The chain runs to 40 residues: Putative protein FAM86JP (40 aa).

Positions M1–S40 are disordered. Positions S10 to A23 are enriched in basic residues.

The sequence is that of Putative protein FAM86JP from Homo sapiens (Human).